Consider the following 207-residue polypeptide: LexA repressor (207 aa).

The H-T-H motif DNA-binding region spans 28 to 48; it reads VREIAVAVGLASSSTVHGHLE. Active-site for autocatalytic cleavage activity residues include Ser129 and Lys167.

This sequence belongs to the peptidase S24 family. Homodimer.

The catalysed reaction is Hydrolysis of Ala-|-Gly bond in repressor LexA.. Represses a number of genes involved in the response to DNA damage (SOS response), including recA and lexA. In the presence of single-stranded DNA, RecA interacts with LexA causing an autocatalytic cleavage which disrupts the DNA-binding part of LexA, leading to derepression of the SOS regulon and eventually DNA repair. The polypeptide is LexA repressor (Oceanobacillus iheyensis (strain DSM 14371 / CIP 107618 / JCM 11309 / KCTC 3954 / HTE831)).